Reading from the N-terminus, the 333-residue chain is Ribosomal protein L11 methyltransferase (333 aa).

S-adenosyl-L-methionine-binding residues include Thr160, Gly181, Asp203, and Asn267.

It belongs to the methyltransferase superfamily. PrmA family.

The protein localises to the cytoplasm. The enzyme catalyses L-lysyl-[protein] + 3 S-adenosyl-L-methionine = N(6),N(6),N(6)-trimethyl-L-lysyl-[protein] + 3 S-adenosyl-L-homocysteine + 3 H(+). Methylates ribosomal protein L11. This is Ribosomal protein L11 methyltransferase from Lachnoclostridium phytofermentans (strain ATCC 700394 / DSM 18823 / ISDg) (Clostridium phytofermentans).